The following is a 477-amino-acid chain: Ribulose bisphosphate carboxylase large chain (477 aa).

Positions 1–2 (MS) are excised as a propeptide. Pro-3 is subject to N-acetylproline. Lys-14 carries the N6,N6,N6-trimethyllysine modification. Residues Asn-123 and Thr-173 each coordinate substrate. Lys-175 (proton acceptor) is an active-site residue. Substrate is bound at residue Lys-177. Mg(2+) is bound by residues Lys-201, Asp-203, and Glu-204. The residue at position 201 (Lys-201) is an N6-carboxylysine. His-294 acts as the Proton acceptor in catalysis. Substrate contacts are provided by Arg-295, His-327, and Ser-379.

The protein belongs to the RuBisCO large chain family. Type I subfamily. As to quaternary structure, heterohexadecamer of 8 large chains and 8 small chains; disulfide-linked. The disulfide link is formed within the large subunit homodimers. It depends on Mg(2+) as a cofactor. In terms of processing, the disulfide bond which can form in the large chain dimeric partners within the hexadecamer appears to be associated with oxidative stress and protein turnover.

Its subcellular location is the plastid. It is found in the chloroplast. The catalysed reaction is 2 (2R)-3-phosphoglycerate + 2 H(+) = D-ribulose 1,5-bisphosphate + CO2 + H2O. It carries out the reaction D-ribulose 1,5-bisphosphate + O2 = 2-phosphoglycolate + (2R)-3-phosphoglycerate + 2 H(+). In terms of biological role, ruBisCO catalyzes two reactions: the carboxylation of D-ribulose 1,5-bisphosphate, the primary event in carbon dioxide fixation, as well as the oxidative fragmentation of the pentose substrate in the photorespiration process. Both reactions occur simultaneously and in competition at the same active site. This chain is Ribulose bisphosphate carboxylase large chain, found in Oryza nivara (Indian wild rice).